A 260-amino-acid polypeptide reads, in one-letter code: Sperm microtubule inner protein 6 (260 aa).

It belongs to the SPMIP6 family. In terms of assembly, microtubule inner protein component of sperm flagellar doublet microtubules. Interacts with alpha-tubulin. As to expression, testis-specific, expressed exclusively in germ cells (at protein level). In terms of tissue distribution, testis-specific. Expressed in both lung and testis.

The protein localises to the cytoplasm. Its subcellular location is the cytoskeleton. The protein resides in the nucleus. It is found in the mitochondrion. It localises to the flagellum axoneme. Its function is as follows. May participate in intramanchette transport and midpiece formation of the sperm tail. May play a potential role in somatic cell proliferation. In Mus musculus (Mouse), this protein is Sperm microtubule inner protein 6 (SPMIP6).